Consider the following 808-residue polypeptide: Glutamate receptor 1.1 (808 aa).

Positions 1–19 (MEILFSISILALLFSGVVA) are cleaved as a signal peptide. Over 20–541 (APSDDDVFEE…MWTFFDPFEK (522 aa)) the chain is Extracellular. 3 N-linked (GlcNAc...) asparagine glycosylation sites follow: Asn-288, Asn-339, and Asn-504. Residues 542-562 (SLWLASGAFFVLTGIVVWLVE) form a helical membrane-spanning segment. Residues 563–570 (RSVNPEFQ) lie on the Cytoplasmic side of the membrane. Residues 571–591 (GSWGQQLSMMLWFGFSTIVFA) traverse the membrane as a helical segment. Over 592–602 (HREKLQKMSSR) the chain is Cytoplasmic. The chain crosses the membrane as a helical span at residues 603 to 623 (FLVIVWVFVVLILTSSYSANL). Topologically, residues 624 to 771 (TSTKTISRMQ…SKRFTFRELR (148 aa)) are extracellular. The chain crosses the membrane as a helical span at residues 772-792 (GLFIIAGAAHVLVLALHLFHT). The Cytoplasmic segment spans residues 793-808 (RQEVSRLCTKLQSFYK).

This sequence belongs to the glutamate-gated ion channel (TC 1.A.10.1) family. As to quaternary structure, may form heteromers. Expressed predominantly in roots. First detected in the root-shoot junction, and later in lateral roots and at the margin of matures leaves.

It is found in the membrane. Its function is as follows. Glutamate-gated receptor that probably acts as a non-selective cation channel. Can transport sodium, potassium, and calcium ions. Functions as a carbon and nitrogen regulator and/or sensor that regulates carbon and nitrogen metabolism and distinct physiological process such as germination through the control of acid abscisic (ABA) biosynthesis. May be involved in light-signal transduction and calcium homeostasis via the regulation of calcium influx into cells. Seems required for the regulation of the abscisic acid (ABA) signaling pathway that modulates many aspects of plant physiology such as seed germination and response to drought (e.g. stomata opening). This Arabidopsis thaliana (Mouse-ear cress) protein is Glutamate receptor 1.1 (GLR1.1).